The chain runs to 205 residues: MRLRLFLAASALALLSGCAGLTSHEALEGQGDAQTWKTHKQQLSELDAWQIDGKVGIRAPRDSGSGTLFWLQRQGYYDIRLSGPLGRGAARLTGREGAVSLEVAGQGRYQAESPEALLEEQLGWRLPVSHLLWWVRGLPAPDSKSRLTLDADSRLARLEQDGWQIEYTRYAEQNGYWLPERLKLHGQDLDVTLVIKDWQPRQLGR.

The N-terminal stretch at 1-17 is a signal peptide; it reads MRLRLFLAASALALLSG. Cys18 carries the N-palmitoyl cysteine lipid modification. Cys18 carries the S-diacylglycerol cysteine lipid modification.

This sequence belongs to the LolB family. Monomer.

The protein localises to the cell outer membrane. Plays a critical role in the incorporation of lipoproteins in the outer membrane after they are released by the LolA protein. This Pseudomonas aeruginosa (strain LESB58) protein is Outer-membrane lipoprotein LolB.